The sequence spans 79 residues: U-actitoxin-Avd8b (79 aa).

An N-terminal signal peptide occupies residues 1–19 (MKSLVIVFVVLLGVAMISA). Positions 20-36 (NEEELLAILQDQRNDAR) are excised as a propeptide.

Belongs to the sea anemone 8 toxin family.

It localises to the secreted. Its subcellular location is the nematocyst. The chain is U-actitoxin-Avd8b from Anemonia viridis (Snakelocks anemone).